The chain runs to 129 residues: UPF0212 protein MM_2357 (129 aa).

This sequence belongs to the UPF0212 family.

The polypeptide is UPF0212 protein MM_2357 (Methanosarcina mazei (strain ATCC BAA-159 / DSM 3647 / Goe1 / Go1 / JCM 11833 / OCM 88) (Methanosarcina frisia)).